The chain runs to 544 residues: Aspartokinase (544 aa).

An ACT domain is found at 463 to 535 (LVGKQMVNFI…SAIGDSSAVD (73 aa)).

The protein belongs to the aspartokinase family.

It catalyses the reaction L-aspartate + ATP = 4-phospho-L-aspartate + ADP. It participates in amino-acid biosynthesis; L-methionine biosynthesis via de novo pathway; L-homoserine from L-aspartate: step 1/3. Its pathway is amino-acid biosynthesis; L-threonine biosynthesis; L-threonine from L-aspartate: step 1/5. In terms of biological role, phosphorylates aspartate, the first step in the biosynthesis of amino acids that derive from aspartate (the aspartate family of amino acids), including methioinine and threonine, the latter of which is a precursor to isoleucine. The protein is Aspartokinase of Candida albicans (strain SC5314 / ATCC MYA-2876) (Yeast).